A 238-amino-acid polypeptide reads, in one-letter code: Phosphoribosylaminoimidazole-succinocarboxamide synthase (238 aa).

This sequence belongs to the SAICAR synthetase family.

The enzyme catalyses 5-amino-1-(5-phospho-D-ribosyl)imidazole-4-carboxylate + L-aspartate + ATP = (2S)-2-[5-amino-1-(5-phospho-beta-D-ribosyl)imidazole-4-carboxamido]succinate + ADP + phosphate + 2 H(+). It functions in the pathway purine metabolism; IMP biosynthesis via de novo pathway; 5-amino-1-(5-phospho-D-ribosyl)imidazole-4-carboxamide from 5-amino-1-(5-phospho-D-ribosyl)imidazole-4-carboxylate: step 1/2. The polypeptide is Phosphoribosylaminoimidazole-succinocarboxamide synthase (Desulfitobacterium hafniense (strain DSM 10664 / DCB-2)).